An 86-amino-acid polypeptide reads, in one-letter code: Cell division topological specificity factor (86 aa).

Belongs to the MinE family.

Prevents the cell division inhibition by proteins MinC and MinD at internal division sites while permitting inhibition at polar sites. This ensures cell division at the proper site by restricting the formation of a division septum at the midpoint of the long axis of the cell. The protein is Cell division topological specificity factor of Polaromonas sp. (strain JS666 / ATCC BAA-500).